The following is a 259-amino-acid chain: Flap endonuclease Xni (259 aa).

A Mg(2+)-binding site is contributed by Asp109. Residues 165-255 form the 5'-3' exonuclease domain; the sequence is VKPQQLSDYW…FNLQDLRFTA (91 aa). Residues Leu176, Ile187, and Ile190 each contribute to the K(+) site. Residues 189–194 form an interaction with DNA region; sequence GIGPKA.

It belongs to the Xni family. Mg(2+) is required as a cofactor. Requires K(+) as cofactor.

In terms of biological role, has flap endonuclease activity. During DNA replication, flap endonucleases cleave the 5'-overhanging flap structure that is generated by displacement synthesis when DNA polymerase encounters the 5'-end of a downstream Okazaki fragment. This is Flap endonuclease Xni from Vibrio vulnificus (strain CMCP6).